Consider the following 855-residue polypeptide: Sucrose synthase 7 (855 aa).

The segment at serine 279–threonine 758 is GT-B glycosyltransferase.

The protein belongs to the glycosyltransferase 1 family. Plant sucrose synthase subfamily. As to expression, predominantly expressed in roots, flowers and immature seeds.

It localises to the cytoplasm. It is found in the membrane. It carries out the reaction an NDP-alpha-D-glucose + D-fructose = a ribonucleoside 5'-diphosphate + sucrose + H(+). Sucrose-cleaving enzyme that provides UDP-glucose and fructose for various metabolic pathways. The sequence is that of Sucrose synthase 7 (SUS7) from Oryza sativa subsp. japonica (Rice).